The chain runs to 546 residues: Chaperonin GroEL (546 aa).

ATP is bound by residues 30–33, Lys51, 87–91, Gly415, 479–481, and Asp495; these read TLGP, DGTTT, and NAA.

The protein belongs to the chaperonin (HSP60) family. In terms of assembly, forms a cylinder of 14 subunits composed of two heptameric rings stacked back-to-back. Interacts with the co-chaperonin GroES.

It is found in the cytoplasm. It carries out the reaction ATP + H2O + a folded polypeptide = ADP + phosphate + an unfolded polypeptide.. Together with its co-chaperonin GroES, plays an essential role in assisting protein folding. The GroEL-GroES system forms a nano-cage that allows encapsulation of the non-native substrate proteins and provides a physical environment optimized to promote and accelerate protein folding. This Pseudomonas putida (strain W619) protein is Chaperonin GroEL.